The following is a 72-amino-acid chain: SRY-related protein ADW4 (72 aa).

A DNA-binding region (HMG box) is located at residues 1–69; sequence VKRPMNAFMV…KHMADYPNYK (69 aa).

It is found in the nucleus. The protein is SRY-related protein ADW4 of Alligator mississippiensis (American alligator).